The following is a 544-amino-acid chain: MTKKLSPLEKKNRKPASKACVFCHSKHLQCSNERPCKNCMKRNLGDQCHDAIRKRAKYLNTSGVKKMKSRTNSISSSYRSPSVSESPQNPYTHSIIKQEPDLNMRGELQSIQQENTSHNQPGPSNVSHYVDQRPTIPTNTMLDTTNDVLNKLLYSEPIHSDSISLRDSISEQPEMDSNRRSIDTMFNSNYLNQEYLMLGDIILHSKPSSPSPSNTSASEYNGDATISPANTLLNNTRLDFDNSNDHMSNSKRKLNKLKDSRPFIALGVSNDVPISLQPEGTLSLDNLSTKNEIMNKDNISSNSLKTDYVSPLISHHIYQSVQDIYMHSIPNFDYPQSYHSLTNFLKRRFSGNSLAHDQRQAKRNNLLIILKLIASYRPTFISAHKNLLKPYDLLFLEMSFQRSLIDYEKLLLFNSSPSIIWRRTGEIVSISNDLLSILGFNLSEILSKRTFIMELMYDDESIINYFKLFKSVAVGNLHSSIITKCKLMKNSSAAFHNEASDVADREYIEFCSAWTVKRDPFDIPMLIIGQFLPILPGGEGVRKY.

The segment at residues 20 to 48 (CVFCHSKHLQCSNERPCKNCMKRNLGDQC) is a DNA-binding region (zn(2)-C6 fungal-type). The tract at residues 65–93 (KKMKSRTNSISSSYRSPSVSESPQNPYTH) is disordered. Positions 70 to 86 (RTNSISSSYRSPSVSES) are enriched in low complexity. Positions 403–475 (SLIDYEKLLL…FKLFKSVAVG (73 aa)) constitute a PAS domain.

Belongs to the ERT1/acuK family.

It localises to the nucleus. Its function is as follows. Transcription factor which regulates nonfermentable carbon utilization. The protein is Glucose starvation modulator protein 1 (GSM1) of Debaryomyces hansenii (strain ATCC 36239 / CBS 767 / BCRC 21394 / JCM 1990 / NBRC 0083 / IGC 2968) (Yeast).